Here is a 257-residue protein sequence, read N- to C-terminus: Putative phosphatase YkrA (257 aa).

The active-site Nucleophile is D9. Residue D9 participates in Mg(2+) binding. I10 contacts phosphate. D11 contributes to the Mg(2+) binding site. Phosphate contacts are provided by residues 43–44 (SG) and K183. D206 lines the Mg(2+) pocket. N209 contacts phosphate.

It belongs to the HAD-like hydrolase superfamily. Cof family. Mg(2+) is required as a cofactor.

The chain is Putative phosphatase YkrA (ykrA) from Bacillus subtilis (strain 168).